Here is a 175-residue protein sequence, read N- to C-terminus: Large ribosomal subunit protein uL6 (175 aa).

The protein belongs to the universal ribosomal protein uL6 family. As to quaternary structure, part of the 50S ribosomal subunit.

This protein binds to the 23S rRNA, and is important in its secondary structure. It is located near the subunit interface in the base of the L7/L12 stalk, and near the tRNA binding site of the peptidyltransferase center. The sequence is that of Large ribosomal subunit protein uL6 from Xylella fastidiosa (strain M12).